The following is a 520-amino-acid chain: Peptide chain release factor 3 (520 aa).

In terms of domain architecture, tr-type G spans 8 to 277; the sequence is ESRKTFAIIS…HAPMPNARQT (270 aa). GTP is bound by residues 17 to 24, 85 to 89, and 139 to 142; these read SHPDAGKT, DTPGH, and NKLD.

Belongs to the TRAFAC class translation factor GTPase superfamily. Classic translation factor GTPase family. PrfC subfamily.

The protein localises to the cytoplasm. Increases the formation of ribosomal termination complexes and stimulates activities of RF-1 and RF-2. It binds guanine nucleotides and has strong preference for UGA stop codons. It may interact directly with the ribosome. The stimulation of RF-1 and RF-2 is significantly reduced by GTP and GDP, but not by GMP. The sequence is that of Peptide chain release factor 3 from Staphylococcus saprophyticus subsp. saprophyticus (strain ATCC 15305 / DSM 20229 / NCIMB 8711 / NCTC 7292 / S-41).